A 391-amino-acid polypeptide reads, in one-letter code: 1-deoxy-D-xylulose 5-phosphate reductoisomerase (391 aa).

The NADPH site is built by threonine 17, glycine 18, serine 19, isoleucine 20, asparagine 47, and asparagine 130. Residue lysine 131 coordinates 1-deoxy-D-xylulose 5-phosphate. Glutamate 132 lines the NADPH pocket. A Mn(2+)-binding site is contributed by aspartate 156. The 1-deoxy-D-xylulose 5-phosphate site is built by serine 157, glutamate 158, serine 182, and histidine 205. Glutamate 158 serves as a coordination point for Mn(2+). Glycine 211 provides a ligand contact to NADPH. 1-deoxy-D-xylulose 5-phosphate is bound by residues serine 218, asparagine 223, lysine 224, and glutamate 227. Glutamate 227 serves as a coordination point for Mn(2+).

This sequence belongs to the DXR family. Mg(2+) is required as a cofactor. Requires Mn(2+) as cofactor.

The catalysed reaction is 2-C-methyl-D-erythritol 4-phosphate + NADP(+) = 1-deoxy-D-xylulose 5-phosphate + NADPH + H(+). Its pathway is isoprenoid biosynthesis; isopentenyl diphosphate biosynthesis via DXP pathway; isopentenyl diphosphate from 1-deoxy-D-xylulose 5-phosphate: step 1/6. Functionally, catalyzes the NADPH-dependent rearrangement and reduction of 1-deoxy-D-xylulose-5-phosphate (DXP) to 2-C-methyl-D-erythritol 4-phosphate (MEP). The chain is 1-deoxy-D-xylulose 5-phosphate reductoisomerase from Sinorhizobium fredii (strain NBRC 101917 / NGR234).